Reading from the N-terminus, the 201-residue chain is IMP cyclohydrolase (201 aa).

This sequence belongs to the archaeal IMP cyclohydrolase family.

The catalysed reaction is IMP + H2O = 5-formamido-1-(5-phospho-D-ribosyl)imidazole-4-carboxamide. It functions in the pathway purine metabolism; IMP biosynthesis via de novo pathway; IMP from 5-formamido-1-(5-phospho-D-ribosyl)imidazole-4-carboxamide: step 1/1. Functionally, catalyzes the cyclization of 5-formylamidoimidazole-4-carboxamide ribonucleotide to IMP. The chain is IMP cyclohydrolase from Methanocella arvoryzae (strain DSM 22066 / NBRC 105507 / MRE50).